A 341-amino-acid polypeptide reads, in one-letter code: NADH-quinone oxidoreductase subunit H (341 aa).

Helical transmembrane passes span 38–58 (PSVV…KLLV), 70–90 (ILFI…WAVI), 115–135 (IGVL…IVAG), 161–181 (MGLI…GEMV), 187–207 (MPFW…ISLL), 239–259 (LFFL…TIFF), 275–295 (IPGL…FVWT), and 314–334 (VFLP…LFTG).

This sequence belongs to the complex I subunit 1 family. As to quaternary structure, NDH-1 is composed of 14 different subunits. Subunits NuoA, H, J, K, L, M, N constitute the membrane sector of the complex.

It is found in the cell membrane. The catalysed reaction is a quinone + NADH + 5 H(+)(in) = a quinol + NAD(+) + 4 H(+)(out). Its function is as follows. NDH-1 shuttles electrons from NADH, via FMN and iron-sulfur (Fe-S) centers, to quinones in the respiratory chain. The immediate electron acceptor for the enzyme in this species is believed to be ubiquinone. Couples the redox reaction to proton translocation (for every two electrons transferred, four hydrogen ions are translocated across the cytoplasmic membrane), and thus conserves the redox energy in a proton gradient. This subunit may bind ubiquinone. This Wolbachia sp. subsp. Brugia malayi (strain TRS) protein is NADH-quinone oxidoreductase subunit H.